The following is a 77-amino-acid chain: Acyl carrier protein (77 aa).

Positions 2 to 77 (SSIDKRIKEI…DAIDYITDHT (76 aa)) constitute a Carrier domain. Residue S37 is modified to O-(pantetheine 4'-phosphoryl)serine.

It belongs to the acyl carrier protein (ACP) family. In terms of processing, 4'-phosphopantetheine is transferred from CoA to a specific serine of apo-ACP by AcpS. This modification is essential for activity because fatty acids are bound in thioester linkage to the sulfhydryl of the prosthetic group.

The protein resides in the cytoplasm. It functions in the pathway lipid metabolism; fatty acid biosynthesis. Its function is as follows. Carrier of the growing fatty acid chain in fatty acid biosynthesis. The chain is Acyl carrier protein from Geotalea uraniireducens (strain Rf4) (Geobacter uraniireducens).